A 609-amino-acid polypeptide reads, in one-letter code: MTTPVSPTSLLPLSAEQLTRLQAATGDFSSTQLAWLSGYFWGLIQQPGNVQPGATIDAATTASAVTVPVQTITLISASQTGNARRVAEQLRDDLLAAKLPVNLVNAGDYKFKQIGQEKLLLIVASTQGEGEPAEEAVALHKFLLSKKAPELKDTAFAVFGLGDTSYEFFSKAGKDFDGRLAELGAERLLDRVDADVDYQALAAQWRRQLVDILQARVPVQGNAVAQLAAQGALDEITSSPYSKSSPLQATFAVNQKVTGRGSEKDVRHIEIDLGDSGLRYQPGDALGVWFDNDPALVQELLELLWLKGDESVSVDGKALPLSQALKSHFELTQNTAPIVEKYAALSRNETLLSLLADKPALQQFAQRTPLVDMVRQAPVELTAEQLLGLLRPLTPRLYSIASSQAEAESEVHITVGVVRYEYEGRARAGGASSYLADRLSEDDEIRVFIEHNDNFRLPANSETPVIMIGPGTGIAPFRAFMQQRDADGAEGKNWLFFGNPHFTEDFLYQVEWQRYVKEGLLTHIDLAWSRDQAHKIYVQDKLREKGAEVWRWIQDGAHLYVCGDANRMAKDVERALLDVIVEHGGMDSEQADEFLSDLRLERRYQRDVY.

The Flavodoxin-like domain occupies 72 to 210; that stretch reads ITLISASQTG…LAAQWRRQLV (139 aa). FMN-binding positions include 78 to 83 and 125 to 128; these read SQTGNA and STQG. Positions 244-458 constitute an FAD-binding FR-type domain; that stretch reads SSPLQATFAV…IEHNDNFRLP (215 aa). FAD contacts are provided by residues threonine 332, glutamine 366, 396–399, 414–416, tyrosine 420, and 429–432; these read RLYS, TVG, and GGAS. NADP(+) is bound by residues 529-530, 535-539, and aspartate 571; these read SR and KIYVQ. An FAD-binding site is contributed by tyrosine 609.

The protein belongs to the NADPH-dependent sulphite reductase flavoprotein subunit CysJ family. In the N-terminal section; belongs to the flavodoxin family. This sequence in the C-terminal section; belongs to the flavoprotein pyridine nucleotide cytochrome reductase family. Alpha(8)-beta(8). The alpha component is a flavoprotein, the beta component is a hemoprotein. FAD is required as a cofactor. FMN serves as cofactor.

The enzyme catalyses hydrogen sulfide + 3 NADP(+) + 3 H2O = sulfite + 3 NADPH + 4 H(+). The protein operates within sulfur metabolism; hydrogen sulfide biosynthesis; hydrogen sulfide from sulfite (NADPH route): step 1/1. Functionally, component of the sulfite reductase complex that catalyzes the 6-electron reduction of sulfite to sulfide. This is one of several activities required for the biosynthesis of L-cysteine from sulfate. The flavoprotein component catalyzes the electron flow from NADPH -&gt; FAD -&gt; FMN to the hemoprotein component. The polypeptide is Sulfite reductase [NADPH] flavoprotein alpha-component (Pectobacterium atrosepticum (strain SCRI 1043 / ATCC BAA-672) (Erwinia carotovora subsp. atroseptica)).